The chain runs to 302 residues: Phosphoribosylaminoimidazole-succinocarboxamide synthase (302 aa).

This sequence belongs to the SAICAR synthetase family.

The catalysed reaction is 5-amino-1-(5-phospho-D-ribosyl)imidazole-4-carboxylate + L-aspartate + ATP = (2S)-2-[5-amino-1-(5-phospho-beta-D-ribosyl)imidazole-4-carboxamido]succinate + ADP + phosphate + 2 H(+). Its pathway is purine metabolism; IMP biosynthesis via de novo pathway; 5-amino-1-(5-phospho-D-ribosyl)imidazole-4-carboxamide from 5-amino-1-(5-phospho-D-ribosyl)imidazole-4-carboxylate: step 1/2. The sequence is that of Phosphoribosylaminoimidazole-succinocarboxamide synthase from Leptothrix cholodnii (strain ATCC 51168 / LMG 8142 / SP-6) (Leptothrix discophora (strain SP-6)).